Reading from the N-terminus, the 1149-residue chain is ATP-dependent helicase/deoxyribonuclease subunit B (1149 aa).

An ATP-binding site is contributed by 8 to 15; that stretch reads GRAGTGKT. Positions 784, 1102, 1105, and 1111 each coordinate [4Fe-4S] cluster.

It belongs to the helicase family. AddB/RexB type 1 subfamily. Heterodimer of AddA and AddB. It depends on Mg(2+) as a cofactor. Requires [4Fe-4S] cluster as cofactor.

Its function is as follows. The heterodimer acts as both an ATP-dependent DNA helicase and an ATP-dependent, dual-direction single-stranded exonuclease. Recognizes the chi site generating a DNA molecule suitable for the initiation of homologous recombination. The AddB subunit has 5' -&gt; 3' nuclease activity but not helicase activity. The polypeptide is ATP-dependent helicase/deoxyribonuclease subunit B (Thermoanaerobacter pseudethanolicus (strain ATCC 33223 / 39E) (Clostridium thermohydrosulfuricum)).